We begin with the raw amino-acid sequence, 279 residues long: NAD-dependent protein deacylase (279 aa).

The 253-residue stretch at 20–272 (RERLRQRIFF…PEFVEKLLKG (253 aa)) folds into the Deacetylase sirtuin-type domain. An NAD(+)-binding site is contributed by 48–67 (GAGISAESGIRTFRAADGLW). Positions 92 and 95 each coordinate substrate. 129–132 (QNID) is a binding site for NAD(+). The Proton acceptor role is filled by H147. Residues C155 and C174 each contribute to the Zn(2+) site. NAD(+) contacts are provided by residues 214–216 (GTS), 240–242 (NLE), and A258.

This sequence belongs to the sirtuin family. Class III subfamily. Forms a 1:1 complex with acetyl-CoA synthetase (Acs). Zn(2+) is required as a cofactor.

Its subcellular location is the cytoplasm. It catalyses the reaction N(6)-acetyl-L-lysyl-[protein] + NAD(+) + H2O = 2''-O-acetyl-ADP-D-ribose + nicotinamide + L-lysyl-[protein]. The catalysed reaction is N(6)-succinyl-L-lysyl-[protein] + NAD(+) + H2O = 2''-O-succinyl-ADP-D-ribose + nicotinamide + L-lysyl-[protein]. The enzyme catalyses N(6)-(2-hydroxyisobutanoyl)-L-lysyl-[protein] + NAD(+) + H2O = 2''-O-(2-hydroxyisobutanoyl)-ADP-D-ribose + nicotinamide + L-lysyl-[protein]. Deacetylation is inhibited by nicotinamide. NAD-dependent lysine deacetylase that specifically removes acetyl groups on target proteins. Also acts as a protein-lysine deacylase by mediating protein desuccinylation and de-2-hydroxyisobutyrylation. Modulates the activities of several proteins which are inactive in their acylated form. Activates the enzyme acetyl-CoA synthetase (acs) by deacetylating 'Lys-609' in the inactive, acetylated form of the enzyme. May also modulate the activity of other propionyl-adenosine monophosphate (AMP)-forming enzymes. In Escherichia coli (strain K12), this protein is NAD-dependent protein deacylase.